The chain runs to 154 residues: 6,7-dimethyl-8-ribityllumazine synthase (154 aa).

Residues F22, 56–58, and 80–82 contribute to the 5-amino-6-(D-ribitylamino)uracil site; these read AFE and AVI. A (2S)-2-hydroxy-3-oxobutyl phosphate-binding site is contributed by 85–86; sequence AT. H88 functions as the Proton donor in the catalytic mechanism. F113 contacts 5-amino-6-(D-ribitylamino)uracil. R127 serves as a coordination point for (2S)-2-hydroxy-3-oxobutyl phosphate.

Belongs to the DMRL synthase family. In terms of assembly, forms an icosahedral capsid composed of 60 subunits, arranged as a dodecamer of pentamers.

The enzyme catalyses (2S)-2-hydroxy-3-oxobutyl phosphate + 5-amino-6-(D-ribitylamino)uracil = 6,7-dimethyl-8-(1-D-ribityl)lumazine + phosphate + 2 H2O + H(+). It functions in the pathway cofactor biosynthesis; riboflavin biosynthesis; riboflavin from 2-hydroxy-3-oxobutyl phosphate and 5-amino-6-(D-ribitylamino)uracil: step 1/2. Its function is as follows. Catalyzes the formation of 6,7-dimethyl-8-ribityllumazine by condensation of 5-amino-6-(D-ribitylamino)uracil with 3,4-dihydroxy-2-butanone 4-phosphate. This is the penultimate step in the biosynthesis of riboflavin. This Geobacillus thermodenitrificans (strain NG80-2) protein is 6,7-dimethyl-8-ribityllumazine synthase.